Here is a 109-residue protein sequence, read N- to C-terminus: Iron-sulfur cluster assembly protein CyaY (109 aa).

Belongs to the frataxin family.

Functionally, involved in iron-sulfur (Fe-S) cluster assembly. May act as a regulator of Fe-S biogenesis. This chain is Iron-sulfur cluster assembly protein CyaY, found in Bordetella pertussis (strain Tohama I / ATCC BAA-589 / NCTC 13251).